The chain runs to 174 residues: ATP synthase subunit delta (174 aa).

It belongs to the ATPase delta chain family. As to quaternary structure, F-type ATPases have 2 components, F(1) - the catalytic core - and F(0) - the membrane proton channel. F(1) has five subunits: alpha(3), beta(3), gamma(1), delta(1), epsilon(1). F(0) has three main subunits: a(1), b(2) and c(10-14). The alpha and beta chains form an alternating ring which encloses part of the gamma chain. F(1) is attached to F(0) by a central stalk formed by the gamma and epsilon chains, while a peripheral stalk is formed by the delta and b chains.

The protein resides in the cell inner membrane. In terms of biological role, f(1)F(0) ATP synthase produces ATP from ADP in the presence of a proton or sodium gradient. F-type ATPases consist of two structural domains, F(1) containing the extramembraneous catalytic core and F(0) containing the membrane proton channel, linked together by a central stalk and a peripheral stalk. During catalysis, ATP synthesis in the catalytic domain of F(1) is coupled via a rotary mechanism of the central stalk subunits to proton translocation. Functionally, this protein is part of the stalk that links CF(0) to CF(1). It either transmits conformational changes from CF(0) to CF(1) or is implicated in proton conduction. In Francisella tularensis subsp. tularensis (strain FSC 198), this protein is ATP synthase subunit delta.